The following is a 218-amino-acid chain: CTP-dependent diacylglycerol kinase 1 (218 aa).

Residues 1-19 (MSTKLTWSQWSKKHEIPRK) lie on the Lumenal side of the membrane. A helical transmembrane segment spans residues 20–37 (ALHTSIGFFALLLQGCGY). H38 is a topological domain (cytoplasmic). A helical membrane pass occupies residues 39–59 (AAQIIPVIEIGFIPAFTGDVI). Over 60–88 (RFNWPAFSRLYNRVIGPLMRESEKNAWNG) the chain is Lumenal. The chain crosses the membrane as a helical span at residues 89–109 (VIFYMIGVWIVLKVFPEEIAV). Over 110-142 (MSVLLLSWCDTTASTVGRKWGKYTPKIAKNKSL) the chain is Cytoplasmic. The chain crosses the membrane as a helical span at residues 143-163 (AGSLGAFVCGVFCCYVYWGLF). Topologically, residues 164-179 (RTGPDSLAAQSRIPFP) are lumenal. Helical transmembrane passes span 180 to 200 (WLCL…VWGL) and 201 to 217 (DDNL…LYLI). A topological domain (lumenal) is located at residue M218.

It belongs to the DGK1 family. Ca(2+) serves as cofactor. Mg(2+) is required as a cofactor.

The protein resides in the endoplasmic reticulum membrane. It is found in the nucleus membrane. It catalyses the reaction a 1,2-diacyl-sn-glycerol + CTP = a 1,2-diacyl-sn-glycero-3-phosphate + CDP + H(+). CTP-dependent diacylglycerol kinase that catalyzes the phosphorylation of diacylglycerol (DAG) to phosphatidate (PA). Controls phosphatidate levels at the nuclear envelope. Counteracts the activity of PA phosphatase ned1. May be involved in vesicle trafficking between the endoplasmic reticulum and the Golgi apparatus. Involved in pre-tRNA splicing. This Schizosaccharomyces pombe (strain 972 / ATCC 24843) (Fission yeast) protein is CTP-dependent diacylglycerol kinase 1 (ptp4).